The chain runs to 356 residues: D-alanine--D-alanine ligase (356 aa).

The region spanning 134–339 (KQLFEHRGLP…YSDLITKLID (206 aa)) is the ATP-grasp domain. 167 to 222 (KDKLTYPVFVKPANLGSSVGISKCNNEDELKSGIEEAFQFDRKLVIEQGINAREVE) contacts ATP. Mg(2+) is bound by residues aspartate 293, glutamate 306, and asparagine 308.

The protein belongs to the D-alanine--D-alanine ligase family. It depends on Mg(2+) as a cofactor. Mn(2+) is required as a cofactor.

The protein resides in the cytoplasm. The catalysed reaction is 2 D-alanine + ATP = D-alanyl-D-alanine + ADP + phosphate + H(+). It functions in the pathway cell wall biogenesis; peptidoglycan biosynthesis. Cell wall formation. The sequence is that of D-alanine--D-alanine ligase from Staphylococcus haemolyticus (strain JCSC1435).